Reading from the N-terminus, the 213-residue chain is 3-dehydroquinate dehydratase (213 aa).

Residues Glu27–Arg29 and Arg53 contribute to the 3-dehydroquinate site. The active-site Proton donor/acceptor is His111. Lys138 acts as the Schiff-base intermediate with substrate in catalysis. 3-dehydroquinate-binding residues include Arg175 and Gln197.

This sequence belongs to the type-I 3-dehydroquinase family. In terms of assembly, homodimer.

The enzyme catalyses 3-dehydroquinate = 3-dehydroshikimate + H2O. The protein operates within metabolic intermediate biosynthesis; chorismate biosynthesis; chorismate from D-erythrose 4-phosphate and phosphoenolpyruvate: step 3/7. In terms of biological role, involved in the third step of the chorismate pathway, which leads to the biosynthesis of aromatic amino acids. Catalyzes the cis-dehydration of 3-dehydroquinate (DHQ) and introduces the first double bond of the aromatic ring to yield 3-dehydroshikimate. This is 3-dehydroquinate dehydratase from Thermococcus gammatolerans (strain DSM 15229 / JCM 11827 / EJ3).